A 204-amino-acid chain; its full sequence is Large ribosomal subunit protein uL4 (204 aa).

Residues 53–77 (ISDVSGTTAKPYSQKRTGRARQGSL) form a disordered region. A compositionally biased stretch (polar residues) spans 56-67 (VSGTTAKPYSQK).

Belongs to the universal ribosomal protein uL4 family. In terms of assembly, part of the 50S ribosomal subunit.

Functionally, one of the primary rRNA binding proteins, this protein initially binds near the 5'-end of the 23S rRNA. It is important during the early stages of 50S assembly. It makes multiple contacts with different domains of the 23S rRNA in the assembled 50S subunit and ribosome. Its function is as follows. Forms part of the polypeptide exit tunnel. The sequence is that of Large ribosomal subunit protein uL4 from Wolbachia sp. subsp. Brugia malayi (strain TRS).